The primary structure comprises 304 residues: Hairy/enhancer-of-split related with YRPW motif protein 1 (304 aa).

The tract at residues 1 to 52 (MKRAHPEYSSSDSELDETIEVEKESADENGNLSSALGSMSPTTSSQILARKR) is disordered. A compositionally biased stretch (polar residues) spans 28-47 (ENGNLSSALGSMSPTTSSQI). The interval 48-117 (LARKRRRGII…GGKGYFDAHA (70 aa)) is transcriptional repression and interaction with NCOR1 and SIN3A. The region spanning 49 to 104 (ARKRRRGIIEKRRRDRINNSLSELRRLVPSAFEKQGSAKLEKAEILQMTVDHLKML) is the bHLH domain. One can recognise an Orange domain in the interval 122-158 (YRSLGFRECLAEVARYLSIIEGLDASDPLRVRLVSHL). The segment at 196-234 (LPQNGHGNAGTTASPTEPHHQGRLGSAHPEAPALRAPPS) is disordered. The span at 200–210 (GHGNAGTTASP) shows a compositional bias: polar residues. The YRPW motif motif lies at 294–297 (YRPW).

It belongs to the HEY family. In terms of assembly, self-associates. Interacts with HES1 and HEYL. Interacts with HDAC1, NCOR1 and SIN3A. Interacts with GATA4 and GATA6. Interacts with CCDC89/BOIP. Expressed in the somitic mesoderm, the central nervous system, the kidney, the heart, nasal epithelium, and limbs.

The protein localises to the nucleus. Functionally, transcriptional repressor which binds preferentially to the canonical E box sequence 5'-CACGTG-3'. Downstream effector of Notch signaling required for cardiovascular development. Specifically required for the Notch-induced endocardial epithelial to mesenchymal transition, which is itself criticial for cardiac valve and septum development. May be required in conjunction with HEY2 to specify arterial cell fate or identity. Promotes maintenance of neuronal precursor cells and glial versus neuronal fate specification. Represses transcription by the cardiac transcriptional activators GATA4 and GATA6 and by the neuronal bHLH factors ASCL1/MASH1 and NEUROD4/MATH3. Involved in the regulation of liver cancer cells self-renewal. The protein is Hairy/enhancer-of-split related with YRPW motif protein 1 (HEY1) of Homo sapiens (Human).